The primary structure comprises 2357 residues: Myosin-I heavy chain (2357 aa).

Positions Gln-13–Lys-688 constitute a Myosin motor domain. Gly-106–Thr-113 is an ATP binding site. An actin-binding region spans residues Tyr-579–Asn-586. The IQ domain occupies Leu-691 to Ile-720. The stretch at Lys-787 to Asp-891 forms a coiled coil. The segment at Lys-787–Pro-1076 is binding to talin A. Disordered regions lie at residues Ile-797–Leu-852 and Ala-974–Pro-1112. Composition is skewed to low complexity over residues Asn-1003–Ser-1025 and Thr-1078–Asn-1106. The MyTH4 1 domain occupies Tyr-1155–Lys-1313. The region spanning Ile-1318–Ala-1620 is the FERM 1 domain. The SH3 domain maps to Asn-1618–Ser-1678. The interval Val-1686–Ala-1849 is disordered. Over residues Thr-1706–Ser-1733 the composition is skewed to pro residues. Composition is skewed to low complexity over residues Val-1734 to Leu-1746 and Ser-1755 to Met-1770. A compositionally biased stretch (polar residues) spans Phe-1817–Thr-1828. In terms of domain architecture, MyTH4 2 spans Phe-1894–Arg-2051. The FERM 2 domain occupies Ser-2060 to Gln-2357.

This sequence belongs to the TRAFAC class myosin-kinesin ATPase superfamily. Myosin family. Monomer. Interacts with talA.

It is found in the cytoplasm. Myosins are actin-based motor molecules with ATPase activity. Involved in the early steps of phagocytosis and adhesion. This chain is Myosin-I heavy chain (myoI), found in Dictyostelium discoideum (Social amoeba).